A 198-amino-acid polypeptide reads, in one-letter code: Holliday junction resolvase RecU (198 aa).

The segment at 1–21 (MVNYPHKLSSQKRQPSLSQPK) is disordered. A compositionally biased stretch (polar residues) spans 11-21 (QKRQPSLSQPK). The Mg(2+) site is built by Thr-81, Asp-83, Glu-96, and Gln-115.

The protein belongs to the RecU family. Mg(2+) is required as a cofactor.

The protein localises to the cytoplasm. It carries out the reaction Endonucleolytic cleavage at a junction such as a reciprocal single-stranded crossover between two homologous DNA duplexes (Holliday junction).. Its function is as follows. Endonuclease that resolves Holliday junction intermediates in genetic recombination. Cleaves mobile four-strand junctions by introducing symmetrical nicks in paired strands. Promotes annealing of linear ssDNA with homologous dsDNA. Required for DNA repair, homologous recombination and chromosome segregation. The sequence is that of Holliday junction resolvase RecU from Streptococcus pneumoniae (strain Taiwan19F-14).